Here is a 358-residue protein sequence, read N- to C-terminus: C-X-C chemokine receptor type 4-A (358 aa).

The tract at residues 1–25 (MDGFSGGIDINIFDGNSTENGSGDF) is important for chemokine binding and signaling. Topologically, residues 1–44 (MDGFSGGIDINIFDGNSTENGSGDFEDFIEPCFMHENSDFNRIF) are extracellular. Asparagine 16 and asparagine 20 each carry an N-linked (GlcNAc...) asparagine glycan. 2 disulfide bridges follow: cysteine 32-cysteine 281 and cysteine 113-cysteine 190. A helical membrane pass occupies residues 45–67 (LPTIYSFIFLLGIIGNGLVVVVM). Residues 68–81 (GYQKKSRTMTDKYR) lie on the Cytoplasmic side of the membrane. Residues 82–103 (LHLSVADLLFVFTLPFWSVDAA) form a helical membrane-spanning segment. The segment at 98-101 (WSVD) is chemokine binding. Residues 104–114 (IGWYFKEFLCK) lie on the Extracellular side of the membrane. Residues 115-134 (AVHVIYTVNLYSSVLILAFI) traverse the membrane as a helical segment. The chemokine binding stretch occupies residues 117–121 (HVIYT). Over 135–158 (SLDRYLAIVHATNSQGSRKMLADK) the chain is Cytoplasmic. Residues 139–151 (YLAIVHATNSQGS) are involved in dimerization; when bound to chemokine. The helical transmembrane segment at 159-178 (VVYAGVWLPALLLTVPDLVF) threads the bilayer. The Extracellular segment spans residues 179-202 (ARVSDENGQFVCDRIYPIENRETW). A chemokine binding, important for signaling region spans residues 190–194 (CDRIY). The chain crosses the membrane as a helical span at residues 203–223 (TVGFRFLHITVGLILPGLIIL). The Cytoplasmic segment spans residues 224 to 248 (ICYCVIISKLSHSKGHQKRKALKTT). The chain crosses the membrane as a helical span at residues 249 to 268 (VILILAFFACWLPYYVCLTT). Topologically, residues 269 to 289 (DTFMLLGLVKGDCIWENTLHM) are extracellular. A helical membrane pass occupies residues 290-309 (AISITEALAFFHCCLNPILY). The Cytoplasmic portion of the chain corresponds to 310–358 (AFLGAKFKTSAQNAFTSVSRGSSLKILSKKRAGLSSVSTESESSSFHSS). The tract at residues 338–358 (KKRAGLSSVSTESESSSFHSS) is disordered. Over residues 344–358 (SSVSTESESSSFHSS) the composition is skewed to low complexity.

This sequence belongs to the G-protein coupled receptor 1 family. In terms of assembly, monomer. Can form dimers. In terms of processing, sulfation is required for efficient binding of cxcl12/sdf-1alpha and promotes its dimerization. Post-translationally, O- and N-glycosylated. In terms of tissue distribution, highly expressed in the embryonic nervous system including forebrain, hindbrain and sensory organs (including eye), and in neural crest cells. Also expressed in the dorsal lateral plate, the first site of definitive hematopoiesis in the embryo. Appears in migrating presumptive primordial germ cells (pPGCs) from stage 24. Expressed in the epidermis at stage 40. In the adult, highly expressed in the spleen with lower levels of expression in the liver and very low levels in kidney, heart, skin and brain.

The protein localises to the cell membrane. It localises to the cytoplasm. It is found in the nucleus. The protein resides in the early endosome. Its subcellular location is the late endosome. The protein localises to the lysosome. Receptor for the C-X-C chemokine cxcl12/sdf-1. Transduces a signal by increasing the intracellular level of calcium ions. Signaling with cxcl12/sdf-1 mediates the directional movement of mesodermal cells during gastrulation. May play a role in the migration of embryonic presumptive primordial germ cells (pPGCs). May also be involved in regulating the migration of hematopoietic stem cells into the larval liver. This Xenopus laevis (African clawed frog) protein is C-X-C chemokine receptor type 4-A (cxcr4-a).